A 254-amino-acid polypeptide reads, in one-letter code: Distal membrane-arm assembly complex protein 2 (254 aa).

Serine 250 bears the Phosphoserine mark.

Belongs to the ATP synthase subunit s family. As to quaternary structure, interacts with incompletely assembled mitochondrial NADH:ubiquinone oxidoreductase complex (complex I).

It localises to the mitochondrion. Functionally, required for the assembly of the mitochondrial NADH:ubiquinone oxidoreductase complex (complex I). Involved in the assembly of the distal region of complex I. The sequence is that of Distal membrane-arm assembly complex protein 2 from Rattus norvegicus (Rat).